Consider the following 96-residue polypeptide: MNIRPLHDRVIVKRSEVESKSAGGIVLTGSAAEQSSRGEVLAVGNGRILENGNLMPLDVKVGDIVIFNEGYGVKKEKIDGEEVLILSESDLMAVVG.

It belongs to the GroES chaperonin family. In terms of assembly, heptamer of 7 subunits arranged in a ring. Interacts with the chaperonin GroEL.

The protein localises to the cytoplasm. In terms of biological role, together with the chaperonin GroEL, plays an essential role in assisting protein folding. The GroEL-GroES system forms a nano-cage that allows encapsulation of the non-native substrate proteins and provides a physical environment optimized to promote and accelerate protein folding. GroES binds to the apical surface of the GroEL ring, thereby capping the opening of the GroEL channel. This Shewanella pealeana (strain ATCC 700345 / ANG-SQ1) protein is Co-chaperonin GroES.